We begin with the raw amino-acid sequence, 486 residues long: Glutamyl-tRNA(Gln) amidotransferase subunit A (486 aa).

Residues K78 and S153 each act as charge relay system in the active site. S177 serves as the catalytic Acyl-ester intermediate.

It belongs to the amidase family. GatA subfamily. As to quaternary structure, heterotrimer of A, B and C subunits.

The catalysed reaction is L-glutamyl-tRNA(Gln) + L-glutamine + ATP + H2O = L-glutaminyl-tRNA(Gln) + L-glutamate + ADP + phosphate + H(+). Its function is as follows. Allows the formation of correctly charged Gln-tRNA(Gln) through the transamidation of misacylated Glu-tRNA(Gln) in organisms which lack glutaminyl-tRNA synthetase. The reaction takes place in the presence of glutamine and ATP through an activated gamma-phospho-Glu-tRNA(Gln). The sequence is that of Glutamyl-tRNA(Gln) amidotransferase subunit A from Ruminiclostridium cellulolyticum (strain ATCC 35319 / DSM 5812 / JCM 6584 / H10) (Clostridium cellulolyticum).